We begin with the raw amino-acid sequence, 439 residues long: Hydroxyornithine transacylase SID3 (439 aa).

The PTS1-type peroxisomal targeting signal signature appears at 437-439 (SKL).

This sequence belongs to the lysine N-acyltransferase mbtK family.

The protein localises to the peroxisome. The protein operates within siderophore biosynthesis. Its function is as follows. Hydroxyornithine transacylase; part of the gene cluster that mediates the biosynthesis of hydroxamate-containing siderophores that play a critical role in virulence via intracellular iron acquisition during macrophage infection. This is Hydroxyornithine transacylase SID3 from Ajellomyces capsulatus (Darling's disease fungus).